We begin with the raw amino-acid sequence, 383 residues long: Dimethylsulfoniopropionate lyase 3 (383 aa).

This sequence belongs to the aspartate/glutamate racemases family. ALMA1 subfamily. In terms of assembly, homotetramer.

It carries out the reaction S,S-dimethyl-beta-propiothetin = acrylate + dimethyl sulfide + H(+). In terms of biological role, mediates cleavage of dimethylsulfoniopropionate (DMSP) into dimethyl sulfide (DMS) and acrylate. DMS is the principal form by which sulfur is transported from oceans to the atmosphere and is a key component of the ocean sulfur cycle. The polypeptide is Dimethylsulfoniopropionate lyase 3 (Emiliania huxleyi (strain CCMP1516)).